Reading from the N-terminus, the 559-residue chain is Serine/threonine-protein kinase VRK1 (559 aa).

Positions 32 to 388 (YIVGKQFATG…EDDDEEEEVI (357 aa)) constitute a Protein kinase domain. ATP is bound by residues 38–46 (FATGGFGRI) and Lys61. Asp167 functions as the Proton acceptor in the catalytic mechanism. Disordered stretches follow at residues 315–419 (EAAQ…ATSD) and 448–559 (SSCE…SSEV). Polar residues-rich tracts occupy residues 405–418 (RSFN…TATS) and 449–460 (SCESQYESNEPG). A compositionally biased stretch (basic and acidic residues) spans 533–542 (TSARYQEKRA). Polar residues predominate over residues 545-559 (NTKPTFDDSSCSSEV).

This sequence belongs to the protein kinase superfamily. CK1 Ser/Thr protein kinase family. VRK subfamily. Autophosphorylates in vitro.

It is found in the nucleus. The protein resides in the cytoplasm. It localises to the cajal body. The enzyme catalyses L-seryl-[protein] + ATP = O-phospho-L-seryl-[protein] + ADP + H(+). The catalysed reaction is L-threonyl-[protein] + ATP = O-phospho-L-threonyl-[protein] + ADP + H(+). Its function is as follows. Serine/threonine kinase that phosphorylates baf-1, thus regulating the association of baf-1 with chromatin and nuclear membrane proteins during nuclear envelope formation. May act through the egl-17 signaling pathway. Essential in hermaphrodites for formation of the vulva, uterus, and uterine seam cells and for development and maintenance of the somatic gonad and thus the germ line. Acts to prevent cep-1 from triggering an inappropriate cell cycle arrest, thereby promoting germ cell proliferation. Regulates anchor cell polarity and the timing of anchor cell invasion through the basement membranes separating vulval and somatic gonadal cells during the L3 larval stage. This Caenorhabditis briggsae protein is Serine/threonine-protein kinase VRK1.